We begin with the raw amino-acid sequence, 256 residues long: Follistatin-related protein 3 (256 aa).

The first 23 residues, 1–23 (MRSGALWPLLWGALVWTVGSVGA), serve as a signal peptide directing secretion. Positions 34–105 (GVCWLQQGRE…SCDGVECGPG (72 aa)) constitute a TB domain. Disulfide bonds link cysteine 36–cysteine 59, cysteine 46–cysteine 90, cysteine 60–cysteine 93, cysteine 97–cysteine 108, cysteine 102–cysteine 117, cysteine 119–cysteine 151, cysteine 123–cysteine 144, and cysteine 133–cysteine 165. Asparagine 71 carries an N-linked (GlcNAc...) asparagine glycan. The 21-residue stretch at 97 to 117 (CDGVECGPGKACRMLGGRPHC) folds into the Follistatin-like 1 domain. 2 Kazal-like domains span residues 111 to 167 (LGGR…RCQK) and 187 to 243 (SAHC…ICTG). A Follistatin-like 2 domain is found at 168-191 (SCAQVVCPRPQSCLVDQTGSAHCV). 3 disulfides stabilise this stretch: cysteine 193–cysteine 227, cysteine 198–cysteine 220, and cysteine 209–cysteine 241. The N-linked (GlcNAc...) asparagine glycan is linked to asparagine 213.

Interacts with INHBA and INHBB. Interacts with FN1. Interacts with ADAM12. Interacts with MLLT10; the interaction enhances MLLT10 in vitro transcriptional activity and self-association. Interacts with MSTN. As to expression, abundantly expressed in heart, lung, kidney and testis. Continuously expressed in embryonic heart.

It localises to the secreted. Its subcellular location is the nucleus. The secreted form is a binding and antagonizing protein for members of the TGF-beta family, such as activin, BMP2 and MSTN. Inhibits activin A-, activin B-, BMP2- and MSDT-induced cellular signaling; more effective on activin A than on activin B. Involved in bone formation; inhibits osteoclast differentiation. Involved in hematopoiesis; involved in differentiation of hemopoietic progenitor cells, increases hematopoietic cell adhesion to fibronectin and seems to contribute to the adhesion of hematopoietic precursor cells to the bone marrow stroma. The nuclear form is probably involved in transcriptional regulation via interaction with MLLT10. This chain is Follistatin-related protein 3 (Fstl3), found in Mus musculus (Mouse).